We begin with the raw amino-acid sequence, 164 residues long: ATP synthase subunit b (164 aa).

The helical transmembrane segment at 5-25 (IGELIGNFILVAGSFLLLIVL) threads the bilayer.

This sequence belongs to the ATPase B chain family. In terms of assembly, F-type ATPases have 2 components, F(1) - the catalytic core - and F(0) - the membrane proton channel. F(1) has five subunits: alpha(3), beta(3), gamma(1), delta(1), epsilon(1). F(0) has three main subunits: a(1), b(2) and c(10-14). The alpha and beta chains form an alternating ring which encloses part of the gamma chain. F(1) is attached to F(0) by a central stalk formed by the gamma and epsilon chains, while a peripheral stalk is formed by the delta and b chains.

Its subcellular location is the cell membrane. Its function is as follows. F(1)F(0) ATP synthase produces ATP from ADP in the presence of a proton or sodium gradient. F-type ATPases consist of two structural domains, F(1) containing the extramembraneous catalytic core and F(0) containing the membrane proton channel, linked together by a central stalk and a peripheral stalk. During catalysis, ATP synthesis in the catalytic domain of F(1) is coupled via a rotary mechanism of the central stalk subunits to proton translocation. Functionally, component of the F(0) channel, it forms part of the peripheral stalk, linking F(1) to F(0). The polypeptide is ATP synthase subunit b (Streptococcus gordonii (strain Challis / ATCC 35105 / BCRC 15272 / CH1 / DL1 / V288)).